The primary structure comprises 421 residues: Medium-chain specific acyl-CoA dehydrogenase, mitochondrial (421 aa).

A mitochondrion-targeting transit peptide spans 1-25 (MIALFRRSCGVLRSLSHFDWRSQHT). Position 69 is an N6-acetyllysine; alternate (lysine 69). An N6-succinyllysine; alternate modification is found at lysine 69. Lysine 79 carries the N6-acetyllysine modification. 158-167 (YCVTEPVAGS) contacts FAD. Residue serine 167 coordinates octanoyl-CoA. The residue at position 179 (lysine 179) is an N6-succinyllysine. 191 to 193 (WIT) lines the FAD pocket. Residue lysine 212 is modified to N6-acetyllysine; alternate. Lysine 212 carries the post-translational modification N6-succinyllysine; alternate. Residue serine 216 participates in octanoyl-CoA binding. N6-acetyllysine; alternate occurs at positions 217, 259, and 271. Lysine 217, lysine 259, and lysine 271 each carry N6-succinyllysine; alternate. An octanoyl-CoA-binding site is contributed by aspartate 278. Lysine 279 carries the post-translational modification N6-acetyllysine. Arginine 281 lines the octanoyl-CoA pocket. Lysine 301 carries the N6-acetyllysine modification. FAD contacts are provided by residues 306-308 (RKT) and 316-317 (HQ). The octanoyl-CoA site is built by arginine 349 and threonine 351. Residue threonine 351 is modified to Phosphothreonine. 374–378 (QIFGG) serves as a coordination point for FAD. Position 401 (glutamate 401) interacts with octanoyl-CoA. Residue glutamate 401 is the Proton acceptor of the active site. 402–405 (GTAQ) contacts FAD.

The protein belongs to the acyl-CoA dehydrogenase family. Homotetramer. Interacts with the heterodimeric electron transfer flavoprotein ETF. Requires FAD as cofactor. Acetylated. Could occur at proximity of the cofactor-binding sites and reduce the catalytic activity. Could be deacetylated by SIRT3.

It localises to the mitochondrion matrix. The catalysed reaction is a medium-chain 2,3-saturated fatty acyl-CoA + oxidized [electron-transfer flavoprotein] + H(+) = a medium-chain (2E)-enoyl-CoA + reduced [electron-transfer flavoprotein]. The enzyme catalyses pentanoyl-CoA + oxidized [electron-transfer flavoprotein] + H(+) = (2E)-pentenoyl-CoA + reduced [electron-transfer flavoprotein]. It carries out the reaction hexanoyl-CoA + oxidized [electron-transfer flavoprotein] + H(+) = (2E)-hexenoyl-CoA + reduced [electron-transfer flavoprotein]. It catalyses the reaction octanoyl-CoA + oxidized [electron-transfer flavoprotein] + H(+) = (2E)-octenoyl-CoA + reduced [electron-transfer flavoprotein]. The catalysed reaction is decanoyl-CoA + oxidized [electron-transfer flavoprotein] + H(+) = (2E)-decenoyl-CoA + reduced [electron-transfer flavoprotein]. The enzyme catalyses dodecanoyl-CoA + oxidized [electron-transfer flavoprotein] + H(+) = (2E)-dodecenoyl-CoA + reduced [electron-transfer flavoprotein]. It carries out the reaction tetradecanoyl-CoA + oxidized [electron-transfer flavoprotein] + H(+) = (2E)-tetradecenoyl-CoA + reduced [electron-transfer flavoprotein]. It catalyses the reaction oxidized [electron-transfer flavoprotein] + hexadecanoyl-CoA + H(+) = (2E)-hexadecenoyl-CoA + reduced [electron-transfer flavoprotein]. Its pathway is lipid metabolism; mitochondrial fatty acid beta-oxidation. Functionally, medium-chain specific acyl-CoA dehydrogenase is one of the acyl-CoA dehydrogenases that catalyze the first step of mitochondrial fatty acid beta-oxidation, an aerobic process breaking down fatty acids into acetyl-CoA and allowing the production of energy from fats. The first step of fatty acid beta-oxidation consists in the removal of one hydrogen from C-2 and C-3 of the straight-chain fatty acyl-CoA thioester, resulting in the formation of trans-2-enoyl-CoA. Electron transfer flavoprotein (ETF) is the electron acceptor that transfers electrons to the main mitochondrial respiratory chain via ETF-ubiquinone oxidoreductase (ETF dehydrogenase). Among the different mitochondrial acyl-CoA dehydrogenases, medium-chain specific acyl-CoA dehydrogenase acts specifically on acyl-CoAs with saturated 6 to 12 carbons long primary chains. This is Medium-chain specific acyl-CoA dehydrogenase, mitochondrial from Bos taurus (Bovine).